Here is a 409-residue protein sequence, read N- to C-terminus: Coagulation factor IX (409 aa).

Ca(2+) is bound by residues Tyr1, Asn2, Glu7, Glu8, Glu16, Glu18, Glu21, Glu22, Glu27, Glu28, and Glu31. The Gla domain maps to Tyr1–Val47. 4-carboxyglutamate is present on residues Glu7, Glu8, Glu16, Glu18, Glu21, Glu22, Glu27, Glu28, Glu31, Glu34, Glu37, and Glu41. Glu16 contributes to the Mg(2+) binding site. An intrachain disulfide couples Cys19 to Cys24. Glu21 contacts Mg(2+). Glu27 contributes to the Mg(2+) binding site. Glu31 contacts Mg(2+). Ca(2+) contacts are provided by Glu37, Glu41, Asp48, Gly49, and Gln51. Mg(2+)-binding residues include Glu37 and Glu41. The EGF-like 1; calcium-binding domain maps to Asp48–Glu84. 10 disulfides stabilise this stretch: Cys52-Cys63, Cys57-Cys72, Cys74-Cys83, Cys89-Cys100, Cys96-Cys110, Cys112-Cys125, Cys133-Cys291, Cys208-Cys224, Cys338-Cys352, and Cys363-Cys391. Ca(2+)-binding residues include Asp65 and Asp66. Position 65 is a (3R)-3-hydroxyaspartate (Asp65). A Phosphoserine modification is found at Ser69. The EGF-like 2 domain maps to Leu85–Lys126. Positions Ala148–Arg182 are cleaved as a propeptide — activation peptide. The residue at position 157 (Tyr157) is a Sulfotyrosine. Ser160 bears the Phosphoserine mark. Thr161 carries the post-translational modification Phosphothreonine; alternate. A glycan (O-linked (GalNAc...) threonine; alternate) is linked at Thr161. Thr171 carries an O-linked (GalNAc...) threonine glycan. The N-linked (GlcNAc...) asparagine glycan is linked to Asn174. One can recognise a Peptidase S1 domain in the interval Ile183–Trp409. Residue His223 is the Charge relay system of the active site. Residues Glu237, Asn239, Glu242, Glu244, and Glu247 each coordinate Ca(2+). N-linked (GlcNAc...) asparagine glycosylation occurs at Asn262. Residue Asp271 is the Charge relay system of the active site. Ser367 serves as the catalytic Charge relay system.

Belongs to the peptidase S1 family. As to quaternary structure, heterodimer of a light chain and a heavy chain; disulfide-linked. Interacts (inactive and activated) with F11 (activated) in calcium-dependent manner. Interacts with SERPINC1. Post-translationally, activated by factor XIa, which excises the activation peptide. The propeptide can also be removed by snake venom protease. Activated by coagulation factor VIIa-tissue factor (F7-F3) complex in calcium-dependent manner. In terms of processing, the iron and 2-oxoglutarate dependent 3-hydroxylation of aspartate and asparagine is (R) stereospecific within EGF domains.

The protein resides in the secreted. It catalyses the reaction Selective cleavage of Arg-|-Ile bond in factor X to form factor Xa.. In terms of biological role, factor IX is a vitamin K-dependent plasma protein that participates in the intrinsic pathway of blood coagulation by converting factor X to its active form in the presence of Ca(2+) ions, phospholipids, and factor VIIIa. The chain is Coagulation factor IX (F9) from Sus scrofa (Pig).